We begin with the raw amino-acid sequence, 427 residues long: Glutamate-1-semialdehyde 2,1-aminomutase (427 aa).

K265 carries the N6-(pyridoxal phosphate)lysine modification.

It belongs to the class-III pyridoxal-phosphate-dependent aminotransferase family. HemL subfamily. Homodimer. The cofactor is pyridoxal 5'-phosphate.

Its subcellular location is the cytoplasm. The catalysed reaction is (S)-4-amino-5-oxopentanoate = 5-aminolevulinate. The protein operates within porphyrin-containing compound metabolism; protoporphyrin-IX biosynthesis; 5-aminolevulinate from L-glutamyl-tRNA(Glu): step 2/2. This is Glutamate-1-semialdehyde 2,1-aminomutase from Marinomonas sp. (strain MWYL1).